Consider the following 337-residue polypeptide: Fructose-1,6-bisphosphatase class 1 (337 aa).

Positions 89, 112, 114, and 115 each coordinate Mg(2+). Substrate-binding positions include D115–S118, N208, Y241, and K271. E277 is a binding site for Mg(2+).

The protein belongs to the FBPase class 1 family. As to quaternary structure, homotetramer. Mg(2+) is required as a cofactor.

The protein localises to the cytoplasm. It catalyses the reaction beta-D-fructose 1,6-bisphosphate + H2O = beta-D-fructose 6-phosphate + phosphate. It participates in carbohydrate biosynthesis; gluconeogenesis. In Yersinia pseudotuberculosis serotype O:1b (strain IP 31758), this protein is Fructose-1,6-bisphosphatase class 1.